We begin with the raw amino-acid sequence, 226 residues long: Phospholipase Culp4 (226 aa).

An N-terminal signal peptide occupies residues 1–45 (MIPRPQPHSGRWRAGAARRLTSLVAAAFAAATLLLTPALAPPASA). A disulfide bridge connects residues Cys-47 and Cys-117. Ser-128 (nucleophile) is an active-site residue. Cys-191 and Cys-198 are joined by a disulfide. Asp-195 is an active-site residue. His-207 acts as the Proton donor/acceptor in catalysis.

The protein belongs to the cutinase family. In terms of assembly, homodimer.

The protein resides in the cell membrane. It localises to the secreted. The protein localises to the cell wall. The enzyme catalyses 1,2-dihexadecanoyl-sn-glycero-3-phosphocholine + H2O = 1-hexadecanoyl-sn-glycero-3-phosphocholine + hexadecanoate + H(+). It carries out the reaction a butanoate ester + H2O = an aliphatic alcohol + butanoate + H(+). With respect to regulation, inhibited by high concentrations of paraoxon. Inhibited by tetrahydrolipstatin (THL), a specific lipase inhibitor. In terms of biological role, A2-type phospholipase, which is probably involved in the degradation of macrophage membrane. Hydrolyzes dipalmitoylphosphatidylcholine. Also shows moderate esterase activity and hydrolyzes the p-nitrophenol-linked aliphatic ester pNP-butyrate (C4). Does not exhibit cutinase activity. The chain is Phospholipase Culp4 from Mycobacterium tuberculosis (strain ATCC 25618 / H37Rv).